The sequence spans 193 residues: MEEIKVHIGKTVALMNDNIDTDQIIPKSFLKRIERTGFGEFLFDSWRYLPNRKPNPDFPLNALDRQEATILITGENFGCGSSREHAAWALLDYRFRVIIAGSYSDIFYMNCTKNGVLPIVLPREAREKLAKIAAEENVTIDLPNQQVISSVGTYPFEIDATWKNKFINGLDDIAITFEHIDAIKAYEQKVDSI.

Belongs to the LeuD family. LeuD type 1 subfamily. In terms of assembly, heterodimer of LeuC and LeuD.

It carries out the reaction (2R,3S)-3-isopropylmalate = (2S)-2-isopropylmalate. Its pathway is amino-acid biosynthesis; L-leucine biosynthesis; L-leucine from 3-methyl-2-oxobutanoate: step 2/4. Catalyzes the isomerization between 2-isopropylmalate and 3-isopropylmalate, via the formation of 2-isopropylmaleate. This is 3-isopropylmalate dehydratase small subunit from Listeria monocytogenes serovar 1/2a (strain ATCC BAA-679 / EGD-e).